Reading from the N-terminus, the 218-residue chain is N-(5'-phosphoribosyl)anthranilate isomerase (218 aa).

The protein belongs to the TrpF family.

The catalysed reaction is N-(5-phospho-beta-D-ribosyl)anthranilate = 1-(2-carboxyphenylamino)-1-deoxy-D-ribulose 5-phosphate. The protein operates within amino-acid biosynthesis; L-tryptophan biosynthesis; L-tryptophan from chorismate: step 3/5. This Rhodopseudomonas palustris (strain HaA2) protein is N-(5'-phosphoribosyl)anthranilate isomerase.